The following is a 275-amino-acid chain: Gamma carbonic anhydrase 1, mitochondrial (275 aa).

The transit peptide at 1–43 (MGTLGRAFYSVGFWIRETGQALDRLGCRLQGKNYFREQLSRHR) directs the protein to the mitochondrion. Substrate contacts are provided by residues 86–88 (RGD) and 101–102 (QD). Zn(2+) is bound by residues histidine 107, histidine 130, and histidine 135. Residue asparagine 209 participates in substrate binding. Residues 256–275 (LNLPNNILPDKETKRPSNVN) are disordered. Residues 264-275 (PDKETKRPSNVN) show a composition bias toward basic and acidic residues.

The protein belongs to the gamma-class carbonic anhydrase family. Homotrimer. Component of the mitochondrial oxidoreductase respiratory chain complex I; element of the extra matrix-exposed domain, which is attached to the membrane arm of this complex. Requires Zn(2+) as cofactor.

It localises to the mitochondrion membrane. In terms of biological role, enzyme involved in the catabolism of H(2)CO(3) but that does not mediates the reversible hydration of carbon dioxide. Mediates complex I assembly in mitochondria and respiration. This Arabidopsis thaliana (Mouse-ear cress) protein is Gamma carbonic anhydrase 1, mitochondrial (GAMMACA1).